The primary structure comprises 259 residues: Polycomb group RING finger protein 1 (259 aa).

At A2 the chain carries N-acetylalanine. Position 3 is a phosphoserine (S3). K24 is covalently cross-linked (Glycyl lysine isopeptide (Lys-Gly) (interchain with G-Cter in SUMO2)). Residues 47–86 form an RING-type zinc finger; the sequence is CCLCAGYFVDATTITECLHTFCKSCIVKYLQTSKYCPMCN. The necessary for repressor activity stretch occupies residues 86 to 247; it reads NIKIHETQPL…LSHWFGKPSP (162 aa). A Glycyl lysine isopeptide (Lys-Gly) (interchain with G-Cter in SUMO2) cross-link involves residue K88. Residues 150–255 are required for the interaction with the KDM2B-SKP1 heterodimeric complex; it reads LPFSSFDHSK…SPLLLQYSVK (106 aa). The interval 167–255 is RING-finger and WD40-associated ubiquitin-like domain (RAWUL); sufficient for interaction with BCOR and BCORL1; the sequence is EQLSLCLERL…SPLLLQYSVK (89 aa).

In terms of assembly, interacts with BCORL1, forming heterodimers. The PCGF1-BCORL1 heterodimeric complex interacts with the KDM2B-SKP1 heterodimeric complex to form a homotetrameric polycomb repression complex 1 (PRC1.1). Component of the repressive BCOR complex containing a Polycomb group subcomplex at least composed of RYBP, RING1 and RNF2/RING2. Specifically interacts with BCOR, RING1 and RNF2/RING2. Component of a PRC1-like complex. Interacts with CBX6, CBX7 and CBX8. Interacts with DPPA4, NANOG, POU5F1 and RYBP.

The protein resides in the nucleus. Functionally, component of the Polycomb group (PcG) multiprotein BCOR complex, a complex required to maintain the transcriptionally repressive state of some genes, such as BCL6 and the cyclin-dependent kinase inhibitor, CDKN1A. Transcriptional repressor that may be targeted to the DNA by BCL6; this transcription repressor activity may be related to PKC signaling pathway. Represses CDKN1A expression by binding to its promoter, and this repression is dependent on the retinoic acid response element (RARE element). Promotes cell cycle progression and enhances cell proliferation as well. May have a positive role in tumor cell growth by down-regulating CDKN1A. Component of a Polycomb group (PcG) multiprotein PRC1-like complex, a complex class required to maintain the transcriptionally repressive state of many genes, including Hox genes, throughout development. PcG PRC1 complex acts via chromatin remodeling and modification of histones; it mediates monoubiquitination of histone H2A 'Lys-119', rendering chromatin heritably changed in its expressibility. Within the PRC1-like complex, regulates RNF2 ubiquitin ligase activity. Regulates the expression of DPPA4 and NANOG in the NT2 embryonic carcinoma cells. This is Polycomb group RING finger protein 1 (PCGF1) from Bos taurus (Bovine).